The following is a 178-amino-acid chain: Large ribosomal subunit protein uL10 (178 aa).

The protein belongs to the universal ribosomal protein uL10 family. In terms of assembly, part of the ribosomal stalk of the 50S ribosomal subunit. The N-terminus interacts with L11 and the large rRNA to form the base of the stalk. The C-terminus forms an elongated spine to which L12 dimers bind in a sequential fashion forming a multimeric L10(L12)X complex.

In terms of biological role, forms part of the ribosomal stalk, playing a central role in the interaction of the ribosome with GTP-bound translation factors. This Albidiferax ferrireducens (strain ATCC BAA-621 / DSM 15236 / T118) (Rhodoferax ferrireducens) protein is Large ribosomal subunit protein uL10.